We begin with the raw amino-acid sequence, 747 residues long: MATKFPSFNQGLAQDPTTRRIWYGIATAHDFESHDGMTEEQLYQKLFATHFGHLAIIGLWVAGNLFHIAWQGNFEQWVTDPLHIRPIAHAIWDPHFGQGITDALTQAGATSPVNIAYSGLYHWWYTIGMRTNAQLFQGAIFLNILVCWLLFAGWLHLQPKFRPSLAWFKNAEAQLNHHLAVLFGFSSIAWTGHLVHVAIPESRGQHVGWDNWLSVLPHPQGLAPFFSLNWGAYAQNPDSLDAVFGTSQGAGTAIFTFLGGLHPQSESLWLTDIAHHHLAIGVMFIIAGHMYRNTFGIGHTLKEITEAHNTDNPNDPHTTAKDGRHFGVNHNGIFETVNNSLHFQLGLALASLGAACSLVAQHMGALPSYAFIARDYTTQSALYTHHQYIAMFLMVGAFSHGAIFFVRDYDPELNKGNVLARVLETKEALISHLSWVTMLLGFHTLGIYVHNDVVVAFGNPEKQILVEPVFAQAIQAFSGKVMYGINALLANANSSATLAANSMPGNHYWMDMINRQDALTNFLPIGPADFLVHHAIALGLHTTALILIKGALDARGSKLIPDKKDFGYAFPCDGPGRGGTCDSSAWDATYLAMFWALNTIAWITFYWHWKHLAIWQGNVAQFNESGTYLMGWFRDYLWLNSSQLINGYNPFGVNALSPWAWMFLFGHLIWATGFMFLISWRGYWQELIETLVWAHQRTPIANLVGWRDKPVALSIVQARLVGLTHFTVGNFVTFGAFVIASTSGKFG.

The next 8 membrane-spanning stretches (helical) occupy residues 46–69, 135–158, 175–199, 273–291, 341–364, 380–406, 428–450, and 530–548; these read LFAT…FHIA, LFQG…LHLQ, LNHH…HVAI, IAHH…GHMY, LHFQ…QHMG, SALY…IFFV, ALIS…IYVH, and FLVH…LILI. 2 residues coordinate [4Fe-4S] cluster: cysteine 572 and cysteine 581. 2 consecutive transmembrane segments (helical) span residues 588 to 609 and 656 to 678; these read ATYL…YWHW and LSPW…MFLI. The divinyl chlorophyll a site is built by histidine 667, methionine 675, and tyrosine 683. Tryptophan 684 provides a ligand contact to phylloquinone. A helical membrane pass occupies residues 720–740; the sequence is LVGLTHFTVGNFVTFGAFVIA.

Belongs to the PsaA/PsaB family. In terms of assembly, the PsaA/B heterodimer binds the P700 divinyl chlorophyll special pair and subsequent electron acceptors. PSI consists of a core antenna complex that captures photons, and an electron transfer chain that converts photonic excitation into a charge separation. The cyanobacterial PSI reaction center is composed of one copy each of PsaA,B,C,D,E,F,I,J,K,L,M and X, and forms trimeric complexes. Requires PSI electron transfer chain: 5 divinyl chlorophyll a, 1 divinyl chlorophyll a', 2 phylloquinones and 3 4Fe-4S clusters. PSI core antenna: 90 divinyl chlorophyll a, 22 carotenoids, 3 phospholipids and 1 galactolipid. P700 is a divinyl chlorophyll a/divinyl chlorophyll a' dimer, A0 is one or more divinyl chlorophyll a, A1 is one or both phylloquinones and FX is a shared 4Fe-4S iron-sulfur center. as cofactor.

The protein resides in the cellular thylakoid membrane. The catalysed reaction is reduced [plastocyanin] + hnu + oxidized [2Fe-2S]-[ferredoxin] = oxidized [plastocyanin] + reduced [2Fe-2S]-[ferredoxin]. In terms of biological role, psaA and PsaB bind P700, the primary electron donor of photosystem I (PSI), as well as the electron acceptors A0, A1 and FX. PSI is a plastocyanin/cytochrome c6-ferredoxin oxidoreductase, converting photonic excitation into a charge separation, which transfers an electron from the donor P700 chlorophyll pair to the spectroscopically characterized acceptors A0, A1, FX, FA and FB in turn. Oxidized P700 is reduced on the lumenal side of the thylakoid membrane by plastocyanin or cytochrome c6. This chain is Photosystem I P700 chlorophyll a apoprotein A2, found in Prochlorococcus marinus (strain SARG / CCMP1375 / SS120).